The sequence spans 612 residues: Chaperone protein DnaK (612 aa).

Position 173 is a phosphothreonine; by autocatalysis (T173). The disordered stretch occupies residues 576–612; the sequence is AAKAQQAEGGANAEGKKADDNVVDAEYEEVKDDETKK. Residues 578–588 are compositionally biased toward low complexity; it reads KAQQAEGGANA. Positions 596–612 are enriched in acidic residues; the sequence is NVVDAEYEEVKDDETKK.

This sequence belongs to the heat shock protein 70 family.

Acts as a chaperone. The protein is Chaperone protein DnaK of Bacillus velezensis (strain DSM 23117 / BGSC 10A6 / LMG 26770 / FZB42) (Bacillus amyloliquefaciens subsp. plantarum).